The following is a 486-amino-acid chain: Arginine deiminase (486 aa).

C476 serves as the catalytic Amidino-cysteine intermediate.

This sequence belongs to the arginine deiminase family.

Its subcellular location is the cytoplasm. The catalysed reaction is L-arginine + H2O = L-citrulline + NH4(+). It functions in the pathway amino-acid degradation; L-arginine degradation via ADI pathway; carbamoyl phosphate from L-arginine: step 1/2. In terms of biological role, involved in the arginine deiminase pathway of fermentative arginine utilization. The chain is Arginine deiminase (arcA) from Halobacterium salinarum (strain ATCC 29341 / DSM 671 / R1).